The primary structure comprises 345 residues: RDS/peripherin-like protein xRDS36 (345 aa).

The Cytoplasmic segment spans residues 1–24; the sequence is MVLFKAKFSFQRRVKLAQTLWLLS. A helical membrane pass occupies residues 25 to 43; that stretch reads WLSVLVGCLTFGMGIFLKV. The Lumenal portion of the chain corresponds to 44–61; the sequence is QLWIHNEVMDNTTAHAVP. N-linked (GlcNAc...) asparagine glycosylation is present at N54. Residues 62 to 80 form a helical membrane-spanning segment; that stretch reads NTVITAGLVGILLGYFAGK. At 81–99 the chain is on the cytoplasmic side; sequence ISQASMDLTKYQRWKSFMM. The chain crosses the membrane as a helical span at residues 100 to 123; the sequence is PFFFLAILSCIVCLAALVLSVALR. Residues 124–264 lie on the Lumenal side of the membrane; sequence GTLEESLKIG…LGYYTGIMAT (141 aa). N-linked (GlcNAc...) asparagine glycosylation is present at N229. Residues 265–290 traverse the membrane as a helical segment; sequence NGAAVTLSFLLQASVLVSLRYVQTSM. At 291 to 345 the chain is on the cytoplasmic side; sequence DKIRDPDDVEADTEGFLLEKGVMETVNSSLEKIKDLFKSNQVETAEGGGEGAAGS.

It belongs to the PRPH2/ROM1 family. In terms of assembly, homodimer; disulfide-linked. Rod specific.

The protein localises to the membrane. This Xenopus laevis (African clawed frog) protein is RDS/peripherin-like protein xRDS36 (rds36).